Here is a 169-residue protein sequence, read N- to C-terminus: Ribosome-binding factor A (169 aa).

The segment at 124-169 is disordered; sequence AGAKHAGDADPYKSDIPEDVEIDEDDFDEEDEDLIDDEELDEDGNK. A compositionally biased stretch (basic and acidic residues) spans 128 to 139; it reads HAGDADPYKSDI. Over residues 140–169 the composition is skewed to acidic residues; it reads PEDVEIDEDDFDEEDEDLIDDEELDEDGNK.

Belongs to the RbfA family. As to quaternary structure, monomer. Binds 30S ribosomal subunits, but not 50S ribosomal subunits or 70S ribosomes.

The protein localises to the cytoplasm. Functionally, one of several proteins that assist in the late maturation steps of the functional core of the 30S ribosomal subunit. Associates with free 30S ribosomal subunits (but not with 30S subunits that are part of 70S ribosomes or polysomes). Required for efficient processing of 16S rRNA. May interact with the 5'-terminal helix region of 16S rRNA. This is Ribosome-binding factor A from Arthrobacter sp. (strain FB24).